Reading from the N-terminus, the 475-residue chain is Ankyrin repeat, SAM and basic leucine zipper domain-containing protein 1 (475 aa).

The segment at 1-24 (MAAAVQRGLPVAGGGESSESEDDG) is disordered. Residues S17, S18, and S20 each carry the phosphoserine modification. ANK repeat units follow at residues 45 to 74 (EKNEIFKKALTTGDISLVEELLDSGISVES), 78 to 107 (YGWTPLMYAASVANVELVRVLLDRGANASF), 110 to 144 (DKHTVLITACSARGSQEQILKCVELLLSRNADPNV), 148 to 177 (RLMTPIMYAARDGHPQVVALLVAQGAEVNA), 181 to 210 (NGYTALTWAARQGHKNVVLKLLELGANKML), and 214 to 243 (DGKTPSEVANKNKHPEIFSLLSLTLNPLEG). The region spanning 272–334 (SYAAFGDLEI…KILAALKELA (63 aa)) is the SAM domain.

As to quaternary structure, interacts with DDX4, PIWIL1, RANBP9 and TDRD1.

The protein resides in the cytoplasm. In terms of biological role, plays a central role during spermatogenesis by repressing transposable elements and preventing their mobilization, which is essential for the germline integrity. Acts via the piRNA metabolic process, which mediates the repression of transposable elements during meiosis by forming complexes composed of piRNAs and Piwi proteins and governs the methylation and subsequent repression of transposons. Its association with pi-bodies suggests a participation in the primary piRNAs metabolic process. Required prior to the pachytene stage to facilitate the production of multiple types of piRNAs, including those associated with repeats involved in the regulation of retrotransposons. May act by mediating protein-protein interactions during germ cell maturation. In Loxodonta africana (African elephant), this protein is Ankyrin repeat, SAM and basic leucine zipper domain-containing protein 1 (ASZ1).